A 286-amino-acid polypeptide reads, in one-letter code: Bifunctional protein FolD (286 aa).

Residues 165–167, Ser190, and Val231 each bind NADP(+); that span reads GRS.

Belongs to the tetrahydrofolate dehydrogenase/cyclohydrolase family. In terms of assembly, homodimer.

The catalysed reaction is (6R)-5,10-methylene-5,6,7,8-tetrahydrofolate + NADP(+) = (6R)-5,10-methenyltetrahydrofolate + NADPH. It carries out the reaction (6R)-5,10-methenyltetrahydrofolate + H2O = (6R)-10-formyltetrahydrofolate + H(+). It functions in the pathway one-carbon metabolism; tetrahydrofolate interconversion. Functionally, catalyzes the oxidation of 5,10-methylenetetrahydrofolate to 5,10-methenyltetrahydrofolate and then the hydrolysis of 5,10-methenyltetrahydrofolate to 10-formyltetrahydrofolate. The sequence is that of Bifunctional protein FolD from Bacillus cereus (strain ATCC 14579 / DSM 31 / CCUG 7414 / JCM 2152 / NBRC 15305 / NCIMB 9373 / NCTC 2599 / NRRL B-3711).